Consider the following 377-residue polypeptide: 23S rRNA (uracil(747)-C(5))-methyltransferase RlmC (377 aa).

Residues C3, C11, C14, and C87 each coordinate [4Fe-4S] cluster. Q212, F241, E262, and N307 together coordinate S-adenosyl-L-methionine. The active-site Nucleophile is C334.

It belongs to the class I-like SAM-binding methyltransferase superfamily. RNA M5U methyltransferase family. RlmC subfamily.

It carries out the reaction uridine(747) in 23S rRNA + S-adenosyl-L-methionine = 5-methyluridine(747) in 23S rRNA + S-adenosyl-L-homocysteine + H(+). Its function is as follows. Catalyzes the formation of 5-methyl-uridine at position 747 (m5U747) in 23S rRNA. In Proteus mirabilis (strain HI4320), this protein is 23S rRNA (uracil(747)-C(5))-methyltransferase RlmC.